Reading from the N-terminus, the 126-residue chain is Alpha-lactalbumin (126 aa).

The C-type lysozyme domain maps to 1-126 (RIFQICELSR…CNSDLDQWKC (126 aa)). Disulfide bonds link C6/C126, C30/C117, C63/C82, and C78/C96. An N-linked (GlcNAc...) asparagine glycan is attached at N47. 5 residues coordinate Ca(2+): K84, D87, D89, D92, and D93.

It belongs to the glycosyl hydrolase 22 family. In terms of assembly, lactose synthase (LS) is a heterodimer of a catalytic component, beta1,4-galactosyltransferase (beta4Gal-T1) and a regulatory component, alpha-lactalbumin (LA). Mammary gland specific. Secreted in milk.

Its subcellular location is the secreted. Its function is as follows. Regulatory subunit of lactose synthase, changes the substrate specificity of galactosyltransferase in the mammary gland making glucose a good acceptor substrate for this enzyme. This enables LS to synthesize lactose, the major carbohydrate component of milk. In other tissues, galactosyltransferase transfers galactose onto the N-acetylglucosamine of the oligosaccharide chains in glycoproteins. In Ornithorhynchus anatinus (Duckbill platypus), this protein is Alpha-lactalbumin (LALBA).